A 78-amino-acid polypeptide reads, in one-letter code: NAD(P)H-quinone oxidoreductase subunit O (78 aa).

This sequence belongs to the complex I NdhO subunit family. As to quaternary structure, NDH-1 can be composed of about 15 different subunits; different subcomplexes with different compositions have been identified which probably have different functions.

The protein resides in the cellular thylakoid membrane. The enzyme catalyses a plastoquinone + NADH + (n+1) H(+)(in) = a plastoquinol + NAD(+) + n H(+)(out). It carries out the reaction a plastoquinone + NADPH + (n+1) H(+)(in) = a plastoquinol + NADP(+) + n H(+)(out). Functionally, NDH-1 shuttles electrons from an unknown electron donor, via FMN and iron-sulfur (Fe-S) centers, to quinones in the respiratory and/or the photosynthetic chain. The immediate electron acceptor for the enzyme in this species is believed to be plastoquinone. Couples the redox reaction to proton translocation, and thus conserves the redox energy in a proton gradient. Cyanobacterial NDH-1 also plays a role in inorganic carbon-concentration. The protein is NAD(P)H-quinone oxidoreductase subunit O of Prochlorococcus marinus (strain AS9601).